The chain runs to 1096 residues: Centrosome-associated zinc finger protein Cp190 (1096 aa).

The tract at residues 1 to 209 is involved in microtubule and centrosome binding; the sequence is MGEVKSVKVD…GDSSNVKQEP (209 aa). The region spanning 30–97 is the BTB domain; that stretch reads CDLTLQFRDN…MYTGTLEFEL (68 aa). The disordered stretch occupies residues 126-308; the sequence is MENVNRQQRP…PQGTQTQLEH (183 aa). 2 stretches are compositionally biased toward polar residues: residues 175–213 and 220–230; these read RANT…TSPF and YNNNKRPAQTS. A phosphoserine mark is found at S197 and S211. Positions 207-271 are nuclear localization; the sequence is QEPTSPFEQL…GDNDPEYDGG (65 aa). The interval 210–245 is involved in interaction with cliff; sequence TSPFEQLRKGYNNNKRPAQTSLLSPPSKKPSLEEVK. At T229 the chain carries Phosphothreonine. At S233 the chain carries Phosphoserine. The span at 239-252 shows a compositional bias: basic and acidic residues; it reads PSLEEVKEFAEQQR. The segment at 245–468 is centrosomal targeting M domain involved in interaction with ZIPIC; that stretch reads KEFAEQQRMR…IAQGAENTTG (224 aa). Low complexity predominate over residues 292-305; sequence STSKQQSPQGTQTQ. 2 positions are modified to phosphoserine: S298 and S319. The involved in interaction with cliff stretch occupies residues 309 to 390; that stretch reads GSTTIILKQD…KPPANQSSAT (82 aa). The interval 366-449 is disordered; sequence NTPAAPTEKS…ANTAAAQKRR (84 aa). Residues 385 to 508 are centrosomal localization and interaction with microtubules; that stretch reads NQSSATTSPH…KETIDPALCE (124 aa). Low complexity predominate over residues 412–445; that stretch reads AQQKAASSQQKSGTSQTTGNQGTGANPPANTAAA. C2H2-type zinc fingers lie at residues 538 to 561 and 567 to 590; these read AECA…NEVH and QQCI…KSYH. T603 carries the phosphothreonine modification. The span at 608 to 625 shows a compositional bias: acidic residues; sequence LGSQDEEEEAEGDEEQEP. Residues 608–630 are disordered; the sequence is LGSQDEEEEAEGDEEQEPEQTGK. S610, S708, and S723 each carry phosphoserine. Residues 710–733 form a disordered region; sequence PEAEHVKQETDEKSLAGTEEEYDD. The segment covering 711–723 has biased composition (basic and acidic residues); the sequence is EAEHVKQETDEKS. T727 carries the phosphothreonine modification. Phosphoserine is present on residues S745, S748, S757, and S760. The interval 770-927 is disordered; it reads LIAESEEQSN…EDSPIPHSDS (158 aa). Positions 777–799 are enriched in basic and acidic residues; the sequence is QSNKEPKSDKPRDDISEKLKELT. Over residues 802–812 the composition is skewed to acidic residues; the sequence is WTEDENDDDVD. T817 is modified (phosphothreonine). Composition is skewed to basic and acidic residues over residues 825 to 834, 849 to 861, 882 to 907, and 914 to 927; these read ANKDPEPTVH, KGPE…KASE, EKMD…KEAE, and EFIK…HSDS. 3 positions are modified to phosphoserine: S920, S925, and S927. Phosphothreonine is present on T936. The residue at position 938 (S938) is a Phosphoserine. Composition is skewed to basic and acidic residues over residues 960–973 and 1011–1035; these read IAEA…KDIV and AAEK…EDKP. The tract at residues 960 to 1096 is disordered; that stretch reads IAEAEKPDQE…GVSAAAKEEL (137 aa). A phosphoserine mark is found at S1071 and S1074. The segment covering 1076–1086 has biased composition (acidic residues); that stretch reads WGDDDEDEDEN.

In terms of assembly, homodimerizes via the N-terminal BTB domain. Component of the gypsy chromatin insulator complex, composed of Cp190, mod(mdg4) and su(Hw). The gypsy chromatin insulator complex interacts with Topors via mod(mdg4) and su(Hw). Interacts with Cp60. Interacts with inv. Interacts with Nup98. Interacts (via BTB domain) with pita (via region between the ZAD domain and the first zinc finger domain); the interaction is direct. Interacts with ZIPIC (via region between the ZAD domain and the first zinc finger domain); the interaction is direct. Interacts (via regions between the BTB domain and first zinc finger domain) with cliff (via regions flanking MADF domain 1); the interaction is probably direct. Associates (via N-terminus) with microtubules; the interaction is direct, is enhanced by dimerization and involves multiple regions within the N-terminus. Microtubule association is enriched at growing plus ends. As to expression, expressed in spermatids but not in mature spermatozoa. Localizes within the spermatids to a sheath of microtubules around the nucleus and to microtubules within the tail.

It is found in the nucleus. It localises to the cytoplasm. The protein resides in the cytoskeleton. Its subcellular location is the microtubule organizing center. The protein localises to the centrosome. It is found in the chromosome. It localises to the nucleoplasm. Plays a central role in chromatin domain organization and boundary function through recruitment by a range of insulator DNA-binding proteins, including ZIPIC, pita, CTCF, su(Hw), cliff and others. Together with pita and CTCF cooperatively binds to and regulates the activity of the Miscadastral pigmentation (MCP) insulator. Cooperatively recruited to the front-ultraabdominal (Fub) boundary by pita, su(Hw) and cliff. Recruitment of Cp190 together with Chro/chromator induces chromatin decondensation. Component of the gypsy chromatin insulator complex which is required for the function of the gypsy chromatin insulator and other endogenous chromatin insulators. Chromatin insulators are regulatory elements that establish independent domains of transcriptional activity within eukaryotic genomes. Insulators have two defining properties; they can block the communication between an enhancer and a promoter when placed between them and can also buffer transgenes from position effect variegation (PEV). Insulators are proposed to structure the chromatin fiber into independent domains of differing transcriptional potential by promoting the formation of distinct chromatin loops to form topologically associating domains (TADs). This chromatin looping may involve the formation of insulator bodies, where homotypic interactions between individual subunits of the insulator complex could promote the clustering of widely spaced insulators at the nuclear periphery. Within the gypsy insulator complex, this protein may directly bind to insulator DNA at sites distinct from those recognized by su(Hw). Required during embryogenesis for axial expansion, an actin/myosin dependent process that distributes the dividing nuclei along the anterior-posterior axis of the syncytial embryo. Associates with centrosomes and interphase microtubules during mitosis, and recruits CP60; may have a role in maintaining centrosome and spindle integrity. This Drosophila melanogaster (Fruit fly) protein is Centrosome-associated zinc finger protein Cp190.